The primary structure comprises 238 residues: Small ribosomal subunit protein uS2 (238 aa).

It belongs to the universal ribosomal protein uS2 family.

The polypeptide is Small ribosomal subunit protein uS2 (Moorella thermoacetica (strain ATCC 39073 / JCM 9320)).